The following is a 340-amino-acid chain: Ephrin-B3 (340 aa).

A signal peptide spans 1–27 (MGAPHFGPGGVQVGALLLLGFAGLVSG). Residues 28-167 (LSLEPVYWNS…TRGMKVLLRV (140 aa)) enclose the Ephrin RBD domain. The Extracellular segment spans residues 28 to 227 (LSLEPVYWNS…GPLPPPSMPA (200 aa)). 2 disulfides stabilise this stretch: Cys-62/Cys-104 and Cys-92/Cys-156. The segment at 168–227 (GQSPRGGAVPRKPVSEMPMERDRGAAHSAEPGRDTIPGDPSSNATSRGAEGPLPPPSMPA) is disordered. Basic and acidic residues predominate over residues 185-200 (PMERDRGAAHSAEPGR). N-linked (GlcNAc...) asparagine glycosylation occurs at Asn-210. The helical transmembrane segment at 228 to 248 (VAGAAGGMALLLLGVAGAGGA) threads the bilayer. At 249-340 (MCWRRRRAKP…QSPPNIYYKV (92 aa)) the chain is on the cytoplasmic side. The interval 254-300 (RRAKPSESRHPGPGSFGRGGSLGLGGGGGMGPREAEPGELGIALRGG) is disordered. A compositionally biased stretch (gly residues) spans 267–284 (GSFGRGGSLGLGGGGGMG). Omega-N-methylarginine is present on Arg-271. Ser-274 is modified (phosphoserine). A PDZ-binding motif is present at residues 338-340 (YKV).

Belongs to the ephrin family. As to quaternary structure, interacts with GRIP1 and GRIP2. Expressed on lateral floor plate cells, specifically on commissural axon segments that have passed through the floor plate. Expressed in cells of the retinal ganglion cell layer during retinal axon guidance to the optic disk. Expressed in myogenic progenitor cells.

The protein localises to the membrane. In terms of biological role, cell surface transmembrane ligand for Eph receptors, a family of receptor tyrosine kinases which are crucial for migration, repulsion and adhesion during neuronal, vascular and epithelial development. Binds promiscuously Eph receptors residing on adjacent cells, leading to contact-dependent bidirectional signaling into neighboring cells. The signaling pathway downstream of the receptor is referred to as forward signaling while the signaling pathway downstream of the ephrin ligand is referred to as reverse signaling. May play a pivotal role in forebrain function. Binds to, and induce the collapse of, commissural axons/growth cones in vitro. May play a role in constraining the orientation of longitudinally projecting axons. In Mus musculus (Mouse), this protein is Ephrin-B3 (Efnb3).